Reading from the N-terminus, the 255-residue chain is dTDP-3-amino-3,6-dideoxy-alpha-D-glucopyranose N,N-dimethyltransferase (255 aa).

S-adenosyl-L-methionine-binding positions include Y14, Y22, Y33, A58, 58–59 (AC), E79, 101–102 (DM), and M117.

This sequence belongs to the methyltransferase TylM1/DesVI family. In terms of assembly, homodimer.

It catalyses the reaction dTDP-3-amino-3,6-dideoxy-alpha-D-glucose + 2 S-adenosyl-L-methionine = dTDP-alpha-D-mycaminose + 2 S-adenosyl-L-homocysteine + 2 H(+). It functions in the pathway antibiotic biosynthesis; tylosin biosynthesis. Functionally, S-adenosyl-L-methionine-dependent methyltransferase involved in the biosynthesis of mycaminose, an essential structural component of the macrolide antibiotic tylosin. Involved in the last step in mycaminose biosynthesis by mediating dimethylation of the hexose C-3' amino group. The chain is dTDP-3-amino-3,6-dideoxy-alpha-D-glucopyranose N,N-dimethyltransferase (tylM1) from Streptomyces fradiae (Streptomyces roseoflavus).